A 1607-amino-acid polypeptide reads, in one-letter code: Thrombospondin type-1 domain-containing protein 7B (1607 aa).

An N-terminal signal peptide occupies residues 1 to 31; the sequence is MFLRSDLAVTHWVSRSMRKLFLVLSLLLSQA. Topologically, residues 32–1556 are extracellular; it reads AHLEGRKDNQ…QPLDPDGRVK (1525 aa). TSP type-1 domains follow at residues 40–98, 102–177, 179–233, 336–392, 399–482, 484–543, 601–661, 662–735, 737–796, 797–869, 871–924, 925–999, 1001–1126, 1128–1182, 1183–1246, 1248–1303, 1304–1369, and 1371–1432; these read NQFL…RVCD, DLFQ…IPCP, DCVV…VSCP, DCET…IAEG, PRYS…VPCS, DCIV…PMCH, DCVV…HSCT, QLYW…LPCK, DCLV…SLCP, SYRW…IPCR, DCTF…CPCD, TFMS…IPCP, DCKL…LLCP, ECVM…ENCF, QFQY…VECV, NCQL…TPCY, SWVL…VPCP, and DCHI…GKCY. N-linked (GlcNAc...) asparagine glycosylation is found at N150 and N219. 3 disulfides stabilise this stretch: C411-C477, C431-C481, and C442-C466. Intrachain disulfides connect C602–C643, C613–C617, and C655–C660. N683 carries an N-linked (GlcNAc...) asparagine glycan. Intrachain disulfides connect C738–C779, C749–C753, and C789–C795. N-linked (GlcNAc...) asparagine glycosylation is present at N757. N842 is a glycosylation site (N-linked (GlcNAc...) asparagine). An N-linked (GlcNAc...) asparagine glycan is attached at N933. 5 disulfides stabilise this stretch: C937–C994, C960–C998, C971–C984, C1002–C1039, and C1013–C1017. N985 carries N-linked (GlcNAc...) asparagine glycosylation. Residue N1105 is glycosylated (N-linked (GlcNAc...) asparagine). Residues C1121 and C1125 are joined by a disulfide bond. N-linked (GlcNAc...) asparagine glycosylation is found at N1187 and N1199. Intrachain disulfides connect C1249–C1287, C1260–C1264, and C1297–C1302. 2 N-linked (GlcNAc...) asparagine glycosylation sites follow: N1309 and N1335. Cystine bridges form between C1372–C1416, C1383–C1387, and C1426–C1431. N-linked (GlcNAc...) asparagine glycosylation is found at N1457 and N1525. The chain crosses the membrane as a helical span at residues 1557 to 1577; the sequence is MWVYGVSGGSFLIMIFLVFTS. Residues 1578-1607 lie on the Cytoplasmic side of the membrane; that stretch reads YLVCKKPKPHQSTPRHQKPLTLAYDGDLDM.

Its subcellular location is the membrane. The protein is Thrombospondin type-1 domain-containing protein 7B of Mus musculus (Mouse).